The chain runs to 551 residues: Membrane protein insertase YidC (551 aa).

The helical transmembrane segment at 3–23 threads the bilayer; sequence ANHIRILLLVTIAIMFISLMG. Residues 33–47 show a composition bias toward polar residues; the sequence is NTKQQTSATQNNSHY. The interval 33 to 58 is disordered; that stretch reads NTKQQTSATQNNSHYDNADSSTNTDV. A run of 3 helical transmembrane segments spans residues 361 to 381, 431 to 451, and 504 to 524; these read LVGNWGLAIILVTCLIKLIFY, LSGCLPMLIQIPIFISLYWVL, and VMMFLPVIFTFLFASFPSGLV.

This sequence belongs to the OXA1/ALB3/YidC family. Type 1 subfamily. Interacts with the Sec translocase complex via SecD. Specifically interacts with transmembrane segments of nascent integral membrane proteins during membrane integration.

The protein resides in the cell inner membrane. Required for the insertion and/or proper folding and/or complex formation of integral membrane proteins into the membrane. Involved in integration of membrane proteins that insert both dependently and independently of the Sec translocase complex, as well as at least some lipoproteins. Aids folding of multispanning membrane proteins. The chain is Membrane protein insertase YidC from Francisella tularensis subsp. novicida (strain U112).